Reading from the N-terminus, the 468-residue chain is Citrate synthase, mitochondrial (468 aa).

The N-terminal 30 residues, 1-30 (MSLITAGRLCARILGAKNSPCALIAARQAS), are a transit peptide targeting the mitochondrion. Active-site residues include His303 and His349. Residue Arg358 coordinates oxaloacetate. Residue Asp404 is part of the active site. The oxaloacetate site is built by Arg430 and Arg450.

The protein belongs to the citrate synthase family. As to quaternary structure, homodimer.

It localises to the mitochondrion matrix. It carries out the reaction oxaloacetate + acetyl-CoA + H2O = citrate + CoA + H(+). It participates in carbohydrate metabolism; tricarboxylic acid cycle; isocitrate from oxaloacetate: step 1/2. In terms of biological role, key enzyme of the Krebs tricarboxylic acid cycle which catalyzes the synthesis of citrate from acetyl coenzyme A and oxaloacetate. The sequence is that of Citrate synthase, mitochondrial (cs) from Xenopus tropicalis (Western clawed frog).